Consider the following 1005-residue polypeptide: Small G protein signaling modulator 2 (1005 aa).

The RUN domain maps to His-34–His-191. 2 disordered regions span residues Gln-95–Ala-121 and His-205–Glu-236. Phosphoserine is present on residues Ser-402 and Leu-444. Residues Gly-566–Arg-938 enclose the Rab-GAP TBC domain. Disordered regions lie at residues Phe-657–Pro-687 and Gly-729–Leu-761. A compositionally biased stretch (basic and acidic residues) spans Glu-672–Glu-681. Positions Phe-730–Ser-740 are enriched in acidic residues.

The protein belongs to the RUTBC family. As to quaternary structure, interacts with RAB4A, RAB11A, RAP1A, RAP1B, RAP2A and RAP2B. No interaction with RAB27A. Interacts with RAB9A. In terms of tissue distribution, widely expressed.

Its subcellular location is the cytoplasm. The protein localises to the melanosome. Functionally, possesses GTPase activator activity towards RAB32, RAB33B and RAB38. Regulates the trafficking of melanogenic enzymes TYR, TYRP1 and DCT/TYRP2 to melanosomes in melanocytes by inactivating RAB32 and RAB38. Inhibits RAB32 and RAB38 activation both directly by promoting their GTPase activity and indirectly by disrupting the RAB9A-HPS4 interaction which is required for RAB32/38 activation. This Mus musculus (Mouse) protein is Small G protein signaling modulator 2 (Sgsm2).